A 213-amino-acid polypeptide reads, in one-letter code: RNA pyrophosphohydrolase (213 aa).

One can recognise a Nudix hydrolase domain in the interval 6–149 (GFRPNVGIVL…KRGVYEIALT (144 aa)). The Nudix box motif lies at 38–59 (GGIDRGETPEQAMIRELHEEVG). The disordered stretch occupies residues 185–213 (NFELPPGGSFEPNPQTSYGLDASGKPHET).

Belongs to the Nudix hydrolase family. RppH subfamily. It depends on a divalent metal cation as a cofactor.

Accelerates the degradation of transcripts by removing pyrophosphate from the 5'-end of triphosphorylated RNA, leading to a more labile monophosphorylated state that can stimulate subsequent ribonuclease cleavage. This Albidiferax ferrireducens (strain ATCC BAA-621 / DSM 15236 / T118) (Rhodoferax ferrireducens) protein is RNA pyrophosphohydrolase.